Consider the following 33-residue polypeptide: Cytochrome b6-f complex subunit 8 (33 aa).

Residues 2 to 22 (LFTLGWASLAAMFSFSIAMVV) form a helical membrane-spanning segment.

The protein belongs to the PetN family. As to quaternary structure, the 4 large subunits of the cytochrome b6-f complex are cytochrome b6, subunit IV (17 kDa polypeptide, PetD), cytochrome f and the Rieske protein, while the 4 small subunits are PetG, PetL, PetM and PetN. The complex functions as a dimer.

The protein localises to the cellular thylakoid membrane. Its function is as follows. Component of the cytochrome b6-f complex, which mediates electron transfer between photosystem II (PSII) and photosystem I (PSI), cyclic electron flow around PSI, and state transitions. This Synechococcus sp. (strain CC9605) protein is Cytochrome b6-f complex subunit 8.